Here is a 601-residue protein sequence, read N- to C-terminus: MEFKVIAEYFDKLEKISSRLQLTALLADLLSKSDKAIIDKVVYIIQGKLWPDFLGYPELGIGEKFLIKAISIATNTDENSVENLYKSIGDLGEVARRLKSKQQSTGILGFLGTSSKESLKVDKVYSTLSKVALTTGEGSRDLKIRLLAGLLKKADPLEAKFLVRFVEGRLRVGIGDATVLDAMAIAFGGGQSASEIVERAYNLRADLGNIAKIIVEKGIEALKTLKPEVGIPIRPMLAERLSNPEEILKKVGGSALVDYKYDGERAQIHKKDDKIFIFSRRLENITSQYPDVVEYISKYTEGKEFIIEGEIVAVDPESGEIRSFQELMHRKRKSDIYEAIKEYPVNVFLFDLMYYEDVDYTTKPLEVRRKLLESIVKPNDYVKIAHHIQVNNVEDLKSFFYRAISEGGEGVMVKAIGKDAIYQAGARGWLWIKLKRDYQSEMADTVDLVVVGGFYGKGKRGGKISSLLMAAYNPKTDTFESVCKVASGFSDEQLDELQKKLMEIKRDIKHPRVNSKMEPDIWVEPVYVAEIIGAEITISPLHTCCQDVVEKDAGLSIRFPRFIRWRDDKSPEDATTTDEILEMYNKQPKKKIESPPIDESV.

Aspartate 258 serves as a coordination point for ATP. Residue lysine 260 is the N6-AMP-lysine intermediate of the active site. Residues arginine 265, arginine 280, glutamate 310, phenylalanine 350, arginine 427, and lysine 433 each contribute to the ATP site. The interval 568-601 (DKSPEDATTTDEILEMYNKQPKKKIESPPIDESV) is disordered.

The protein belongs to the ATP-dependent DNA ligase family. It depends on Mg(2+) as a cofactor.

It carries out the reaction ATP + (deoxyribonucleotide)n-3'-hydroxyl + 5'-phospho-(deoxyribonucleotide)m = (deoxyribonucleotide)n+m + AMP + diphosphate.. In terms of biological role, DNA ligase that seals nicks in double-stranded DNA during DNA replication, DNA recombination and DNA repair. This Saccharolobus islandicus (strain Y.N.15.51 / Yellowstone #2) (Sulfolobus islandicus) protein is DNA ligase.